Reading from the N-terminus, the 162-residue chain is MRRAVCPGSFDPITNGHLDIVIRASKLFDEVVVAVSINKNKATLFTIDERMELIREAVRNHPMAPSNVVVDASHGLVVDFCRARGIQSIVKGLRAVSDFDYELQMAQMNNSLAGVETLFMSTNPQYAFLSSSLVKEVARYGGDVSHLVPDVVLKQLRERAVE.

A substrate-binding site is contributed by serine 9. ATP is bound by residues serine 9–phenylalanine 10 and histidine 17. Residues lysine 41, valine 77, and lysine 91 each contribute to the substrate site. ATP contacts are provided by residues glycine 92 to arginine 94, glutamate 102, and tyrosine 126 to serine 132.

Belongs to the bacterial CoaD family. As to quaternary structure, homohexamer. Mg(2+) serves as cofactor.

It is found in the cytoplasm. The enzyme catalyses (R)-4'-phosphopantetheine + ATP + H(+) = 3'-dephospho-CoA + diphosphate. Its pathway is cofactor biosynthesis; coenzyme A biosynthesis; CoA from (R)-pantothenate: step 4/5. In terms of biological role, reversibly transfers an adenylyl group from ATP to 4'-phosphopantetheine, yielding dephospho-CoA (dPCoA) and pyrophosphate. The polypeptide is Phosphopantetheine adenylyltransferase (Frankia alni (strain DSM 45986 / CECT 9034 / ACN14a)).